The chain runs to 206 residues: Guanylate kinase (206 aa).

The 179-residue stretch at A4–S182 folds into the Guanylate kinase-like domain. A11 to T18 is a binding site for ATP.

It belongs to the guanylate kinase family.

Its subcellular location is the cytoplasm. It carries out the reaction GMP + ATP = GDP + ADP. In terms of biological role, essential for recycling GMP and indirectly, cGMP. This Coxiella burnetii (strain RSA 493 / Nine Mile phase I) protein is Guanylate kinase.